We begin with the raw amino-acid sequence, 333 residues long: Heat shock transcription factor, X-linked member 3 (333 aa).

Positions 1–66 (MASQNTEQEY…QDNSPPEDRN (66 aa)) are disordered. Low complexity predominate over residues 29–39 (GSSPDPNPDSS). The segment covering 49–60 (AMSQDPGSQDNS) has biased composition (polar residues). The DNA-binding element occupies 79–182 (FRLSFPRKLW…PRLLENIQRK (104 aa)). The interval 227-275 (QGAPSVQGPSGTQSFRRSGMWSKKSATRHPLGNGPPQEPNGPSWEGTSG) is disordered. Residues 228 to 242 (GAPSVQGPSGTQSFR) are compositionally biased toward polar residues.

The protein belongs to the HSF family.

It is found in the nucleus. This chain is Heat shock transcription factor, X-linked member 3, found in Homo sapiens (Human).